Here is a 512-residue protein sequence, read N- to C-terminus: Maturase K (512 aa).

This sequence belongs to the intron maturase 2 family. MatK subfamily.

It is found in the plastid. The protein localises to the chloroplast. In terms of biological role, usually encoded in the trnK tRNA gene intron. Probably assists in splicing its own and other chloroplast group II introns. The protein is Maturase K of Oenothera biennis (German evening primrose).